The chain runs to 380 residues: MGRRRQGPAQPASELPARNACLLPNGSAWLPGWAEPDGNGSAGPQDEQLEPAHISPAIPVIITAVYSVVFVVGLVGNSLVMFVIIRYTKMKTATNIYIFNLALADALVTTTMPFQSTVYLMNSWPFGDVLCKIVISIDYYNMFTSIFTLTMMSVDRYIAVCHPVKALDFRTPLKAKIINICIWLLSSSVGISAIILGGTKVREDVDIIECSLQFPDDDYSWWDLFMKICVFVFAFVIPVLIIIVCYTLMILRLKSVRLLSGSREKDRNLRRITRLVLVVVAVFIICWTPIHIFILVEALGSTSHSTAALSSYYFCIALGYTNSSLNPILYAFLDENFKRCFRDFCFPIKMRMERQSTSRVRNTVQDPAYMRNVDGVNKPV.

Over 1 to 57 (MGRRRQGPAQPASELPARNACLLPNGSAWLPGWAEPDGNGSAGPQDEQLEPAHISPA) the chain is Extracellular. N-linked (GlcNAc...) asparagine glycosylation is found at N25 and N39. A helical transmembrane segment spans residues 58–85 (IPVIITAVYSVVFVVGLVGNSLVMFVII). The Cytoplasmic portion of the chain corresponds to 86–95 (RYTKMKTATN). The helical transmembrane segment at 96–119 (IYIFNLALADALVTTTMPFQSTVY) threads the bilayer. Over 120 to 132 (LMNSWPFGDVLCK) the chain is Extracellular. A disulfide bond links C131 and C210. The helical transmembrane segment at 133–154 (IVISIDYYNMFTSIFTLTMMSV) threads the bilayer. The Cytoplasmic portion of the chain corresponds to 155–173 (DRYIAVCHPVKALDFRTPL). The helical transmembrane segment at 174–196 (KAKIINICIWLLSSSVGISAIIL) threads the bilayer. Residues 197–222 (GGTKVREDVDIIECSLQFPDDDYSWW) lie on the Extracellular side of the membrane. Residues 223-247 (DLFMKICVFVFAFVIPVLIIIVCYT) traverse the membrane as a helical segment. The Cytoplasmic segment spans residues 248–274 (LMILRLKSVRLLSGSREKDRNLRRITR). A helical transmembrane segment spans residues 275–296 (LVLVVVAVFIICWTPIHIFILV). At 297 to 311 (EALGSTSHSTAALSS) the chain is on the extracellular side. A helical membrane pass occupies residues 312–333 (YYFCIALGYTNSSLNPILYAFL). The Cytoplasmic segment spans residues 334-380 (DENFKRCFRDFCFPIKMRMERQSTSRVRNTVQDPAYMRNVDGVNKPV). The S-palmitoyl cysteine moiety is linked to residue C345.

This sequence belongs to the G-protein coupled receptor 1 family. Interacts with NHERF1. Interacts with GABARAPL1.

Its subcellular location is the cell membrane. Its function is as follows. G-protein coupled opioid receptor that functions as a receptor for endogenous alpha-neoendorphins and dynorphins, but has low affinity for beta-endorphins. Also functions as a receptor for various synthetic opioids and for the psychoactive diterpene salvinorin A. Ligand binding causes a conformation change that triggers signaling via guanine nucleotide-binding proteins (G proteins) and modulates the activity of down-stream effectors, such as adenylate cyclase. Signaling leads to the inhibition of adenylate cyclase activity. Inhibits neurotransmitter release by reducing calcium ion currents and increasing potassium ion conductance. Plays a role in the perception of pain. Plays a role in mediating reduced physical activity upon treatment with synthetic opioids. Plays a role in the regulation of salivation in response to synthetic opioids. May play a role in arousal and regulation of autonomic and neuroendocrine functions. The sequence is that of Kappa-type opioid receptor (OPRK1) from Cavia porcellus (Guinea pig).